The chain runs to 596 residues: Aspartate--tRNA(Asp/Asn) ligase (596 aa).

Residue Glu172 participates in L-aspartate binding. The interval 196-199 is aspartate; it reads QLFK. Arg218 is a binding site for L-aspartate. Residues 218–220 and Gln227 contribute to the ATP site; that span reads RDE. His455 contributes to the L-aspartate binding site. Glu489 serves as a coordination point for ATP. Arg496 lines the L-aspartate pocket. 541 to 544 provides a ligand contact to ATP; sequence GLDR.

This sequence belongs to the class-II aminoacyl-tRNA synthetase family. Type 1 subfamily. Homodimer.

It is found in the cytoplasm. The catalysed reaction is tRNA(Asx) + L-aspartate + ATP = L-aspartyl-tRNA(Asx) + AMP + diphosphate. Its function is as follows. Aspartyl-tRNA synthetase with relaxed tRNA specificity since it is able to aspartylate not only its cognate tRNA(Asp) but also tRNA(Asn). Reaction proceeds in two steps: L-aspartate is first activated by ATP to form Asp-AMP and then transferred to the acceptor end of tRNA(Asp/Asn). The protein is Aspartate--tRNA(Asp/Asn) ligase of Bordetella avium (strain 197N).